A 374-amino-acid polypeptide reads, in one-letter code: WAT1-related protein At2g39510 (374 aa).

Transmembrane regions (helical) follow at residues 9 to 29, 38 to 58, 64 to 84, 99 to 119, 135 to 155, 182 to 202, 212 to 232, 249 to 269, 284 to 304, and 306 to 326; these read FITV…AKFA, VLAS…AYFL, PKMT…EPTI, TFTA…AWIF, ILGT…KGPL, GASL…LQAI, SLTA…ALFI, LAAV…QGVI, LSMV…MFLG, and ILGA…KSKD. 2 consecutive EamA domains span residues 19–147 and 191–320; these read YAGL…GAML and ICWA…YSVL. The disordered stretch occupies residues 350-374; sequence SKANAKMDTNDASVVISRPNTNESV.

This sequence belongs to the drug/metabolite transporter (DMT) superfamily. Plant drug/metabolite exporter (P-DME) (TC 2.A.7.4) family.

It is found in the membrane. The polypeptide is WAT1-related protein At2g39510 (Arabidopsis thaliana (Mouse-ear cress)).